The chain runs to 325 residues: ATPase ASNA1 homolog 2 (325 aa).

An ATP-binding site is contributed by 22–29 (KGGVGKTT). Residue aspartate 51 is part of the active site. Positions 231 and 258 each coordinate ATP. Residues cysteine 267 and cysteine 270 each contribute to the Zn(2+) site.

It belongs to the arsA ATPase family. As to quaternary structure, homodimer.

It is found in the cytoplasm. It localises to the endoplasmic reticulum. ATPase required for the post-translational delivery of tail-anchored (TA) proteins to the endoplasmic reticulum. Recognizes and selectively binds the transmembrane domain of TA proteins in the cytosol. This complex then targets to the endoplasmic reticulum by membrane-bound receptors, where the tail-anchored protein is released for insertion. This process is regulated by ATP binding and hydrolysis. ATP binding drives the homodimer towards the closed dimer state, facilitating recognition of newly synthesized TA membrane proteins. ATP hydrolysis is required for insertion. Subsequently, the homodimer reverts towards the open dimer state, lowering its affinity for the membrane-bound receptor, and returning it to the cytosol to initiate a new round of targeting. The sequence is that of ATPase ASNA1 homolog 2 from Paramecium tetraurelia.